Consider the following 264-residue polypeptide: Transmembrane protein 270 (264 aa).

3 helical membrane passes run 31-51 (HLYR…LGLA), 74-94 (LSLA…LLLW), and 133-153 (LFLS…LLTW). Residues 227-236 (AQEVKSQETS) are compositionally biased toward polar residues. The interval 227–264 (AQEVKSQETSGPPPQFLIPESSTTESGPLPPQPETPGE) is disordered. Residues 254 to 264 (PLPPQPETPGE) show a composition bias toward pro residues.

In terms of tissue distribution, testis.

The protein resides in the membrane. This Mus musculus (Mouse) protein is Transmembrane protein 270.